An 88-amino-acid chain; its full sequence is Small ribosomal subunit protein bS18A (88 aa).

It belongs to the bacterial ribosomal protein bS18 family. Part of the 30S ribosomal subunit. Forms a tight heterodimer with protein bS6.

Its function is as follows. Binds as a heterodimer with protein bS6 to the central domain of the 16S rRNA, where it helps stabilize the platform of the 30S subunit. This chain is Small ribosomal subunit protein bS18A, found in Mycolicibacterium gilvum (strain PYR-GCK) (Mycobacterium gilvum (strain PYR-GCK)).